The following is a 435-amino-acid chain: Methylenetetrahydrofolate--tRNA-(uracil-5-)-methyltransferase TrmFO (435 aa).

10–15 (GAGLAG) is an FAD binding site.

It belongs to the MnmG family. TrmFO subfamily. FAD is required as a cofactor.

The protein resides in the cytoplasm. The enzyme catalyses uridine(54) in tRNA + (6R)-5,10-methylene-5,6,7,8-tetrahydrofolate + NADH + H(+) = 5-methyluridine(54) in tRNA + (6S)-5,6,7,8-tetrahydrofolate + NAD(+). It catalyses the reaction uridine(54) in tRNA + (6R)-5,10-methylene-5,6,7,8-tetrahydrofolate + NADPH + H(+) = 5-methyluridine(54) in tRNA + (6S)-5,6,7,8-tetrahydrofolate + NADP(+). Functionally, catalyzes the folate-dependent formation of 5-methyl-uridine at position 54 (M-5-U54) in all tRNAs. The polypeptide is Methylenetetrahydrofolate--tRNA-(uracil-5-)-methyltransferase TrmFO (Geotalea uraniireducens (strain Rf4) (Geobacter uraniireducens)).